The sequence spans 383 residues: MTKDTTSPPDQAGGTVAMAVLNAIQNPVVMVDESGFIAFANWEAEAFFGAAFASGALPDLDIHSFGSPLLALVDQVRTQGSPVNEYRVDLSSPRLGQDKLVDLYVAPVLSEPGGVVIVFQERSMADKIDRQLTHRAAARSVTGLASSLAHEIKNPLSGNRGAAQLLEQSVIDDDRALTRLICDETDRIVSLVDRMEVFSDERPVRRMPVNIHSVLDHVKRLAQSGFARNIRITESYDPSLPAVYANRDQLVQVFLNLVKNAAEAVGDRPDGEIMLTTAYRPGIRLSVAGTREKISLPLEFCVHDNGPGVPADLLPHLFDPFITTKTNGSGLGLALVAKIIGDHGGIIECDSQNSRTTFRVLMPASKDASLEDASSASSTGPSR.

The 220-residue stretch at 147-366 (SLAHEIKNPL…TFRVLMPASK (220 aa)) folds into the Histidine kinase domain. A Phosphohistidine; by autocatalysis modification is found at His150.

Post-translationally, autophosphorylated.

The protein resides in the cytoplasm. The enzyme catalyses ATP + protein L-histidine = ADP + protein N-phospho-L-histidine.. Member of the two-component regulatory system NtrB/NtrC, which controls expression of the nitrogen-regulated (ntr) genes in response to nitrogen limitation. Under conditions of nitrogen limitation, NtrB autophosphorylates and transfers the phosphoryl group to NtrC. In the presence of nitrogen, acts as a phosphatase that dephosphorylates and inactivates NtrC. This is Sensory histidine kinase/phosphatase NtrB (ntrB) from Rhizobium leguminosarum bv. phaseoli.